The primary structure comprises 318 residues: Acetylglutamate kinase (318 aa).

Residues 80–81 (GG), Arg102, and Asn203 each bind substrate.

This sequence belongs to the acetylglutamate kinase family. ArgB subfamily.

Its subcellular location is the cytoplasm. The catalysed reaction is N-acetyl-L-glutamate + ATP = N-acetyl-L-glutamyl 5-phosphate + ADP. It participates in amino-acid biosynthesis; L-arginine biosynthesis; N(2)-acetyl-L-ornithine from L-glutamate: step 2/4. In terms of biological role, catalyzes the ATP-dependent phosphorylation of N-acetyl-L-glutamate. The chain is Acetylglutamate kinase from Bifidobacterium adolescentis (strain ATCC 15703 / DSM 20083 / NCTC 11814 / E194a).